The chain runs to 336 residues: MGNCLKPLKEQPPSASPKPLTIPSSSVEPVKENLKEFRFAELNKATKRFRKYMVIKGNDNGFTRTFYEGCINETTFAPSRTGITVSVMECYQDNSQTLQDWKEEVKSLGRISHPNLVKLLGYCCEENKSFLVFEYLHKGSLNRYIFGKEEEALPWETRVKIAIGAAQSIAFLHWVKNSALYRELRMYNILLDEHYNTKLFYLGSKKLCLLEESVTTAFIGRTVYIPPEYVISGHLGTKSDVYTFGVILLEILTGLKASDGKKNENMQSLHVWTKPFLSDQSKIREIIDPRLGNDYPVNAATQMGKLIKRCIKLDTRKRPSMQQVFDGLNDIAEIKD.

Residues 1–25 are disordered; sequence MGNCLKPLKEQPPSASPKPLTIPSS. Gly-2 is lipidated: N-myristoyl glycine. Cys-4 is lipidated: S-palmitoyl cysteine. A Protein kinase domain is found at 52 to 332; it reads YMVIKGNDNG…QVFDGLNDIA (281 aa).

The protein belongs to the protein kinase superfamily. Ser/Thr protein kinase family. As to quaternary structure, component of an immune signaling complex made of, at least, SZE1, BKN2/SZE2, ZAR1 and ZED1. Interacts directly with ZAR1 and Pseudomonas syringae HOPZ1A at the plasma membrane. Post-translationally, N-terminal myristoylation is critical for plasma membrane localization and implication in defense responses. In terms of tissue distribution, expressed in stigma and ovaries in flowers, and in stems and seedlings.

It is found in the cell membrane. Functionally, together with SZE1 and ZED1, required for effector-triggered immunity (e.g. Pseudomonas syringae type III effector HopZ1a) via the activation of ZAR1, thus being essential for resistance against P. syringae pv. tomato DC3000 expressing HopZ1a. Collaboratively with BKN1, involved in compatible pollen-stigma interactions. The chain is Inactive serine/threonine-protein kinase BKN2 from Arabidopsis thaliana (Mouse-ear cress).